Here is a 461-residue protein sequence, read N- to C-terminus: Ribosomal protein uS12 methylthiotransferase RimO (461 aa).

One can recognise an MTTase N-terminal domain in the interval 9 to 124; that stretch reads PRIGMVSLGC…VMDAVHLNLP (116 aa). 6 residues coordinate [4Fe-4S] cluster: Cys-18, Cys-54, Cys-83, Cys-159, Cys-163, and Cys-166. In terms of domain architecture, Radical SAM core spans 145-387; it reads LTPRHYAYLK…AVAEAVSSQK (243 aa). Residues 389 to 461 form the TRAM domain; that stretch reads QQRVGATMQV…QGHDLIAVPV (73 aa).

Belongs to the methylthiotransferase family. RimO subfamily. [4Fe-4S] cluster is required as a cofactor.

The protein resides in the cytoplasm. The enzyme catalyses L-aspartate(89)-[ribosomal protein uS12]-hydrogen + (sulfur carrier)-SH + AH2 + 2 S-adenosyl-L-methionine = 3-methylsulfanyl-L-aspartate(89)-[ribosomal protein uS12]-hydrogen + (sulfur carrier)-H + 5'-deoxyadenosine + L-methionine + A + S-adenosyl-L-homocysteine + 2 H(+). In terms of biological role, catalyzes the methylthiolation of an aspartic acid residue of ribosomal protein uS12. This Polaromonas naphthalenivorans (strain CJ2) protein is Ribosomal protein uS12 methylthiotransferase RimO.